The following is a 132-amino-acid chain: Gamma-crystallin-5 (132 aa).

In terms of domain architecture, Beta/gamma crystallin 'Greek key' 2 spans 1 to 40 (ILYEQPSYRGHQYYLWKGEYPDFQRWMGFNDSIRSCRMSP). The connecting peptide stretch occupies residues 41–45 (YHQGQ). Beta/gamma crystallin 'Greek key' domains follow at residues 46–86 (YKMR…NVFD) and 87–129 (GNWM…RRVH).

Belongs to the beta/gamma-crystallin family. Monomer.

In terms of biological role, crystallins are the dominant structural components of the vertebrate eye lens. This chain is Gamma-crystallin-5 (cryg5), found in Xenopus laevis (African clawed frog).